Here is a 266-residue protein sequence, read N- to C-terminus: Small ribosomal subunit protein uS2 (266 aa).

This sequence belongs to the universal ribosomal protein uS2 family.

This chain is Small ribosomal subunit protein uS2, found in Paramagnetospirillum magneticum (strain ATCC 700264 / AMB-1) (Magnetospirillum magneticum).